Here is a 160-residue protein sequence, read N- to C-terminus: Phosphoribosyl-ATP pyrophosphatase (160 aa).

This sequence belongs to the PRA-PH family.

Its subcellular location is the cytoplasm. It carries out the reaction 1-(5-phospho-beta-D-ribosyl)-ATP + H2O = 1-(5-phospho-beta-D-ribosyl)-5'-AMP + diphosphate + H(+). Its pathway is amino-acid biosynthesis; L-histidine biosynthesis; L-histidine from 5-phospho-alpha-D-ribose 1-diphosphate: step 2/9. This chain is Phosphoribosyl-ATP pyrophosphatase, found in Granulibacter bethesdensis (strain ATCC BAA-1260 / CGDNIH1).